A 380-amino-acid polypeptide reads, in one-letter code: 1-deoxy-D-xylulose 5-phosphate reductoisomerase 2 (380 aa).

NADPH is bound by residues serine 10, glycine 11, serine 12, isoleucine 13, glycine 36, lysine 37, asparagine 38, and asparagine 120. 1-deoxy-D-xylulose 5-phosphate is bound at residue lysine 121. An NADPH-binding site is contributed by glutamate 122. Position 146 (aspartate 146) interacts with Mn(2+). 1-deoxy-D-xylulose 5-phosphate-binding residues include serine 147, glutamate 148, serine 172, and histidine 195. Glutamate 148 lines the Mn(2+) pocket. NADPH is bound at residue glycine 201. The 1-deoxy-D-xylulose 5-phosphate site is built by serine 208, asparagine 213, lysine 214, and glutamate 217. Glutamate 217 is a binding site for Mn(2+).

It belongs to the DXR family. Mg(2+) serves as cofactor. The cofactor is Mn(2+).

It catalyses the reaction 2-C-methyl-D-erythritol 4-phosphate + NADP(+) = 1-deoxy-D-xylulose 5-phosphate + NADPH + H(+). The protein operates within isoprenoid biosynthesis; isopentenyl diphosphate biosynthesis via DXP pathway; isopentenyl diphosphate from 1-deoxy-D-xylulose 5-phosphate: step 1/6. Catalyzes the NADPH-dependent rearrangement and reduction of 1-deoxy-D-xylulose-5-phosphate (DXP) to 2-C-methyl-D-erythritol 4-phosphate (MEP). The polypeptide is 1-deoxy-D-xylulose 5-phosphate reductoisomerase 2 (Bacillus thuringiensis subsp. konkukian (strain 97-27)).